A 379-amino-acid polypeptide reads, in one-letter code: MAISALIEEFQKVSASPKTMLAKYKAQGKKAIGCLPYYVPEELVYAAGMVPMGVWGCNGKQEVRSKEYCASFYCTIAQQSLEMLLDGTLDGLDGIITPVLCDTLRPMSQNFKVAMKDKMPVIFLAHPQVRQNAAGKQFTYDAYSEVKGHLEEICGHEITNDAILDAIKVYNKSRAARREFCKLANEHPDLIPASVRATVLRAAYFMLKDEYTEKLEELNKELAAAPAGKFDGHKVVVSGIIYNMPGILKAMDDNKLAIAADDCAYESRSFAVDAPEDLDNGLQALAVQFSKQKNDVLLYDPEFAKNTRSEHVCNLVKESGAEGLIVFMMQFCDPEEMEYPDLKKALDAHHIPHVKIGVDQMTRDFGQAQTALEAFAESL.

The protein belongs to the FldB/FldC dehydratase alpha/beta subunit family. The (R)-2-hydroxyglutaryl-CoA dehydratase enzyme system is a heterodimer composed of an alpha subunit (HgdA) and a beta subunit (HgdB). It depends on [4Fe-4S] cluster as a cofactor. The cofactor is FMN. Mg(2+) is required as a cofactor.

The protein resides in the cytoplasm. It carries out the reaction (R)-2-hydroxyglutaryl-CoA = (2E)-glutaconyl-CoA + H2O. It participates in amino-acid degradation; L-glutamate degradation via hydroxyglutarate pathway; crotonoyl-CoA from L-glutamate: step 4/5. Its activity is regulated as follows. Activated by the HgdC. Reversibly inactivated by oxidants such as 2-nitrophenol, 3-nitrophenol, 4-nitrophenol, 4-nitrobenzoate, carbonyl cyanide 4-(trifluoromethoxy)phenylhydrazone (FCCP) and chloramphenicol. Irreversibly inactivated by oxidants such as hydroxylamine and nitrite. Functionally, involved in the fermentation of L-glutamate via the hydroxyglutarate pathway. Catalyzes the reversible syn-elimination of water from (R)-2-hydroxyglutaryl-CoA to yield (E)-glutaconyl-CoA. The dehydration mechanism involves a transient one electron reduction of the thioester from (R)-2-hydroxyglutaryl-CoA, generating a ketyl radical. Prior to (E)-glutaconyl-CoA formation, the ketyl radical is subsequently reoxidized by electron transfer back to the HgdA-HgdB complex (CompD) to avoid change in oxidation state of the substrate. The appropriate redox state of dehydratase HgdA-HgdB complex (CompD) is maintained by HgdC (CompA) via hydrolysis of ATP and ATP-dependent electron transfer. Since the electron is recycled, the dehydratase is able to perform several turnovers with only catalytic amounts of ATP and substoichiometric amounts of HgdC (CompA). In Acidaminococcus fermentans (strain ATCC 25085 / DSM 20731 / CCUG 9996 / CIP 106432 / VR4), this protein is (R)-2-hydroxyglutaryl-CoA dehydratase, subunit beta.